The sequence spans 293 residues: tRNA pseudouridine synthase A (293 aa).

The active-site Nucleophile is the aspartate 67. Residue tyrosine 125 coordinates substrate.

This sequence belongs to the tRNA pseudouridine synthase TruA family. Homodimer.

It catalyses the reaction uridine(38/39/40) in tRNA = pseudouridine(38/39/40) in tRNA. Formation of pseudouridine at positions 38, 39 and 40 in the anticodon stem and loop of transfer RNAs. The chain is tRNA pseudouridine synthase A from Synechococcus sp. (strain CC9605).